A 673-amino-acid polypeptide reads, in one-letter code: MADISIPGVTDKYKTNDLIKNLMEAERVPLTREQKQLETYKTQQETWRNVNTQMTYVRESVRSLYSFDNPFSSKLASSTDEYAVSATPKRDAALESFKVEVLQTATADRFLSAELDAKMQVPAGNYEYAVNDKKVSFNWKGGKLSDFVAALNRRSANTIKASIIGISKDKQALLIESLITGSENRLTFSGAARDFALQTGMIGKAPAAAQDSFTIKRDTIRNADNLNSKTVEFSQDALTVPPRSGFESPIPQKIAAEKTKTIRFNVRAIDIPAEEVLPDKPELPSAGTVSFKDVTLSNEEFDTKLPLSEETEKVPAEPVEDYAAVFVKAADGTEIPLGPLKPNGENTSYSIAASDYPGMSALVIKNNNTHKKIVMTKPETIDMAASSGYIPLNPAETAADAKIKYQGITITRPSNTIDDVVPNVTLNIQAKTEKPATISIEPDKKAAKEALITFVGKYNRLMAELNILTQTKPEIITELEYFTEDEAKAAEKRLGMFQTEFSLANGKRALQTITSGRYPTADDAQITMCRKSGISTSASTSGFTGVSASRLRGYLEIDEKKLDAAPQSNMQDIKNLFGYDSDGDLVIDSGIAFAIDKNLQSFTQIGGIIASKTSTLNTRISSSQKNIETLESKLKRKEQDLKTKYGQMEASLNSLEKQSDSITNFSDNQRSGR.

A coiled-coil region spans residues 611 to 664 (SKTSTLNTRISSSQKNIETLESKLKRKEQDLKTKYGQMEASLNSLEKQSDSITN). Positions 649–673 (EASLNSLEKQSDSITNFSDNQRSGR) are disordered. Residues 650–673 (ASLNSLEKQSDSITNFSDNQRSGR) show a composition bias toward polar residues.

Belongs to the FliD family. In terms of assembly, homopentamer.

Its subcellular location is the periplasmic flagellum. It localises to the periplasm. In terms of biological role, required for the morphogenesis and for the elongation of the flagellar filament by facilitating polymerization of the flagellin monomers at the tip of growing filament. Forms a capping structure, which prevents flagellin subunits (transported through the central channel of the flagellum) from leaking out without polymerization at the distal end. The chain is Flagellar hook-associated protein 2 (fliD) from Treponema maltophilum.